A 283-amino-acid chain; its full sequence is Thymidylate synthase (283 aa).

R22 contacts dUMP. The Nucleophile role is filled by C160. DUMP contacts are provided by residues 180–183, N191, and 221–223; these read RSCD and HIY. (6R)-5,10-methylene-5,6,7,8-tetrahydrofolate is bound at residue D183. S282 is a (6R)-5,10-methylene-5,6,7,8-tetrahydrofolate binding site.

This sequence belongs to the thymidylate synthase family. Bacterial-type ThyA subfamily. In terms of assembly, homodimer.

The protein resides in the cytoplasm. The enzyme catalyses dUMP + (6R)-5,10-methylene-5,6,7,8-tetrahydrofolate = 7,8-dihydrofolate + dTMP. The protein operates within pyrimidine metabolism; dTTP biosynthesis. Its function is as follows. Catalyzes the reductive methylation of 2'-deoxyuridine-5'-monophosphate (dUMP) to 2'-deoxythymidine-5'-monophosphate (dTMP) while utilizing 5,10-methylenetetrahydrofolate (mTHF) as the methyl donor and reductant in the reaction, yielding dihydrofolate (DHF) as a by-product. This enzymatic reaction provides an intracellular de novo source of dTMP, an essential precursor for DNA biosynthesis. In Mannheimia succiniciproducens (strain KCTC 0769BP / MBEL55E), this protein is Thymidylate synthase.